The following is a 240-amino-acid chain: MGNDGGSLPTRNELVKEPGKVPPLDIDFKRSVKSSQFSQCAITDEPLYPPIVSCGLGKLYNKASILQMLLDRSSVPKSPSHIKSLKDVVQLQVELDDSGKVLWLCPITRHVMSDTYQFAYIVPCGHVFEYSALKQFGEKMCFQCNQVYEEKDVIPINPNAEQLKTLSKRLLDLALSEKTHSLNKASKKSNKNGDKKRKHVSKSNSKHAKHELRTNRMLDGENVKSETSVTDMERVKRVKI.

Disordered regions lie at residues 1-22 (MGNDGGSLPTRNELVKEPGKVP) and 181-240 (SLNK…RVKI). Positions 185-210 (ASKKSNKNGDKKRKHVSKSNSKHAKH) are enriched in basic residues. Composition is skewed to basic and acidic residues over residues 211–224 (ELRTNRMLDGENVK) and 231–240 (DMERVKRVKI).

Belongs to the rtf2 family. Interacts with pcn1.

The protein localises to the nucleus. In terms of biological role, putative splicing factor that is required for the correct splicing of a subset of pre-mRNAs. Required for the correct splicing of rtf1, a replication termination factor that mediates site-specific replication termination at replication barrier RTS1. This is Splicing factor rtf2 from Schizosaccharomyces pombe (strain 972 / ATCC 24843) (Fission yeast).